A 123-amino-acid chain; its full sequence is Large ribosomal subunit protein uL14 (123 aa).

This sequence belongs to the universal ribosomal protein uL14 family. In terms of assembly, part of the 50S ribosomal subunit. Forms a cluster with proteins L3 and L19. In the 70S ribosome, L14 and L19 interact and together make contacts with the 16S rRNA in bridges B5 and B8.

Binds to 23S rRNA. Forms part of two intersubunit bridges in the 70S ribosome. This Cronobacter sakazakii (strain ATCC BAA-894) (Enterobacter sakazakii) protein is Large ribosomal subunit protein uL14.